Consider the following 645-residue polypeptide: MSNIDFLPISKEDLKKRNIDVLDFIIVTGDAYVDHPSFGTAIIGRVLEREGFTVGIIAQPNWNNIEDFKKLGKPKYGFLVNSGNIDSMVNHYTASKKKRHDDFYSPGGKSGYRPDRAVIVYCNKIKEAFKDSPIIIGGIEASLRRFAHYDYWDNSVRRSILEDSSADLLIYGMGEKPIVQVSNLLRYGMKIDSIKNVRGTTYIEKDISSLKDYIEIPSFEEVSTNKKSYAEAYKIQYYEQDSIRGKTLVQKHKERYVVQNPPQPPLSQEEMDEVYALPYARTYHPMYEAEGGIPAIKEVKFSITSHRGCYGSCSFCALTFHQGRVIQNRSQDSILKEANMMTNMKDFKGYIHDVGGPTANFRHRACKVQEKHGTCKNKQCVFPKACKNLIVDHKEYLSLLRKIRKIPNVKKVFIRSGIRFDYLMYDKNDEFFKELCEHHISGQLKVAPEHISDKVLNLMGKPTRNVYDSFVKKYYDINKKIHKNQFLVPYLMSSHPGSDLKAAIELAQYIKKMGYTPEQVQDFYPTPGSLSTTMYYTGINPLTEEKVYIPKDQKEKRMQRALLQFSIHDNYDLVKEALIKAHREDLIGNGPDCLIPYNKPYKKSHKKNNAKNNNNHYNKNNNYNKNKDISKKNKKNSLSKHKKRK.

The Radical SAM core domain maps to 295-566 (AIKEVKFSIT…RMQRALLQFS (272 aa)). [4Fe-4S] cluster contacts are provided by Cys-309, Cys-313, and Cys-316. Residues 598-645 (NKPYKKSHKKNNAKNNNNHYNKNNNYNKNKDISKKNKKNSLSKHKKRK) form a disordered region. A compositionally biased stretch (basic residues) spans 600–609 (PYKKSHKKNN). The segment covering 610 to 624 (AKNNNNHYNKNNNYN) has biased composition (low complexity). Residues 632–645 (KNKKNSLSKHKKRK) show a composition bias toward basic residues.

Belongs to the UPF0313 family. The cofactor is [4Fe-4S] cluster.

The polypeptide is UPF0313 protein CLB_0243 (Clostridium botulinum (strain ATCC 19397 / Type A)).